Here is a 159-residue protein sequence, read N- to C-terminus: Large ribosomal subunit protein uL23m (159 aa).

Belongs to the universal ribosomal protein uL23 family. Component of the mitochondrial ribosome large subunit (39S) which comprises a 16S rRNA and about 50 distinct proteins.

The protein localises to the mitochondrion. The chain is Large ribosomal subunit protein uL23m (mrpl-23) from Caenorhabditis elegans.